A 275-amino-acid chain; its full sequence is tRNA (guanine-N(1)-)-methyltransferase (275 aa).

S-adenosyl-L-methionine contacts are provided by residues G139 and 159-164; that span reads IGDYIL.

The protein belongs to the RNA methyltransferase TrmD family. In terms of assembly, homodimer.

Its subcellular location is the cytoplasm. The catalysed reaction is guanosine(37) in tRNA + S-adenosyl-L-methionine = N(1)-methylguanosine(37) in tRNA + S-adenosyl-L-homocysteine + H(+). Functionally, specifically methylates guanosine-37 in various tRNAs. The chain is tRNA (guanine-N(1)-)-methyltransferase from Lachnoclostridium phytofermentans (strain ATCC 700394 / DSM 18823 / ISDg) (Clostridium phytofermentans).